The primary structure comprises 291 residues: Ribosomal RNA small subunit methyltransferase H (291 aa).

S-adenosyl-L-methionine contacts are provided by residues 31 to 33, Asp-50, Phe-77, Asp-98, and Gln-105; that span reads GGH.

Belongs to the methyltransferase superfamily. RsmH family.

Its subcellular location is the cytoplasm. It carries out the reaction cytidine(1402) in 16S rRNA + S-adenosyl-L-methionine = N(4)-methylcytidine(1402) in 16S rRNA + S-adenosyl-L-homocysteine + H(+). In terms of biological role, specifically methylates the N4 position of cytidine in position 1402 (C1402) of 16S rRNA. This is Ribosomal RNA small subunit methyltransferase H from Endomicrobium trichonymphae.